The chain runs to 358 residues: E3 ubiquitin-protein ligase RFI2 (358 aa).

Residues 1–34 (MAGAKDSGCDDDLRIAGGCDPGKRGNPEDSSSPV) form a disordered region. Residues 38–83 (CSICLESVLDDGTRSKAKLQCGHQFHLDCIGSAFNMKGAMQCPNCR) form an RING-type; atypical zinc finger. Disordered regions lie at residues 174 to 201 (GPAA…DHFH) and 248 to 313 (SNQR…DQNV). Over residues 187–201 (TDDHPWNSHSNDHFH) the composition is skewed to basic and acidic residues. Residues 248-266 (SNQRSSPAINSYQGSSTQM) show a composition bias toward polar residues. Over residues 299-309 (LPPPPPPPPMP) the composition is skewed to pro residues.

It is found in the nucleus. The catalysed reaction is S-ubiquitinyl-[E2 ubiquitin-conjugating enzyme]-L-cysteine + [acceptor protein]-L-lysine = [E2 ubiquitin-conjugating enzyme]-L-cysteine + N(6)-ubiquitinyl-[acceptor protein]-L-lysine.. It functions in the pathway protein modification; protein ubiquitination. In terms of biological role, mediates phytochrome (phyA and phyB)-controlled seedling deetiolation responses such as hypocotyl elongation in response to red and far-red light. Required for light-induced expression of LHCB3 and CHALCONE SYNTHASE (CHS). Negatively regulates CONSTANS (CO) and FLOWERING LOCUS T (FT) expression and photoperiodic flowering. The chain is E3 ubiquitin-protein ligase RFI2 from Arabidopsis thaliana (Mouse-ear cress).